Here is a 155-residue protein sequence, read N- to C-terminus: Protein PtsT (155 aa).

The protein is Protein PtsT (ptsT) of Geobacillus stearothermophilus (Bacillus stearothermophilus).